The sequence spans 622 residues: MSTYAAYTTSTYQGRGLASGTYASGFGQLVSGMSSAGAICTTQIRDAREREKREIGLLNDRLADYIEKVRFLEAQNRCLSHDIDILRNGFSGGGHVSGLFDAEINQAKHILEQTTAHRSTFERDITGLSAEIEVFRKKWLDAVNAVKAHREDHDVDLDRLAKIEAEISLFKRKIRIVEEDVIRIRRENDGIYNEIARIKQLTHNEIALKNERSLNVSDLLQRINLLQTENNVRIEQELVFIRRDTTADNRDYFRHELQAAIRDIRADYEAISIRNRQDIEVWYREQIRKIQDESVRVNPDLYKEELISIRTTVTNVRSRLAEVEGRNFFLERLIDDLKNNEEAKFFEISLAERDAQIATLRDQCTELSIQMEKLCDNEISLRAEIERYRILLNGANVTTYTSNTHGSGSGIAVGGVVGGSTRVISQTTRTHSSSNTSYSNVPASRGGYSISGNVGGISVGGTIGSHGASAHATGGIIGSGVQAHRGSVSSLITDKPRDRVHDEKGVDQSGRHFHSWYLGTISINQVTPSYIELKNICKIRRVDVGGFRIEQSVNGQVLGSAQINVPLILDPQEVVRFNHRHGKYLGQFFMDVDAFDNSTVARTSMYNYTEPHEERAWFVYLD.

The tract at residues 19 to 54 (SGTYASGFGQLVSGMSSAGAICTTQIRDAREREKRE) is head. The IF rod domain maps to 51–399 (EKREIGLLND…ILLNGANVTT (349 aa)). Positions 55–86 (IGLLNDRLADYIEKVRFLEAQNRCLSHDIDIL) are coil 1A. The tract at residues 87-99 (RNGFSGGGHVSGL) is linker 1. The interval 100-237 (FDAEINQAKH…TENNVRIEQE (138 aa)) is coil 1B. A linker 12 region spans residues 238–255 (LVFIRRDTTADNRDYFRH). Positions 256–399 (ELQAAIRDIR…ILLNGANVTT (144 aa)) are coil 2. The tail stretch occupies residues 400-550 (YTSNTHGSGS…RVDVGGFRIE (151 aa)). In terms of domain architecture, LTD spans 509-622 (SGRHFHSWYL…EERAWFVYLD (114 aa)).

This sequence belongs to the intermediate filament family. In terms of tissue distribution, expressed in intestinal cells and at desmosomes in intestine and pharynx of the larva.

The protein localises to the cytoplasm. Cytoplasmic intermediate filaments provide mechanical strength to cells. Not essential protein, although its absence leads to mild defects in locomotion. The sequence is that of Intermediate filament protein ifc-2 (ifc-2) from Caenorhabditis elegans.